The following is a 158-amino-acid chain: Scytalone dehydratase-like protein CPUR_05428 (158 aa).

Substrate-binding residues include Tyr-24 and Tyr-44. Catalysis depends on residues His-79 and His-104.

The protein belongs to the scytalone dehydratase family.

Its pathway is pigment biosynthesis. Scytalone dehydratase-like protein; part of the ergochrome gene cluster responsible for the typical purple-black color of the ergot sclerotia. The ergochrome gene cluster produces several ergot pigments including the yellow ergochrome secalonic acid and its derivatives, as well as the red anthraquinones endocrocin and clavorubin. The pathway begins with the synthesis of atrochrysone thioester by the polyketide synthase (PKS) CPUR_05437. The atrochrysone carboxyl ACP thioesterase CPUR_05436 then breaks the thioester bond and releases the atrochrysone carboxylic acid from CPUR_05437. The atrochrysone carboxylic acid is then converted to atrochrysone which is further transformed into emodin anthrone. The next step is performed by the anthrone oxygenase CPUR_05434 that catalyzes the oxidation of emodinanthrone to emodin. Emodin is further modified to yield monodictyphenone via several steps involving CPUR_05427, CPUR_05428, CPUR_05429 and CPUR_05430. The short chain dehydrogenase/reductase CPUR_05418 then catalyzes the C-5 ketoreduction to give the xanthone skeleton of the monomeric units. Ergochromes formation requires further dimerization steps of different xanthone units, probably catalyzed by the cytochrome P450 monooxygenase CPUR_05419. CPUR_05425, CPUR_05426 and CPUR_05431 are unique to Claviceps, thus it is likely that they are involved in further modification of xanthone units or in their dimerization. The yellow ergochromes and the red anthraquinone pigments endocrocin and clavorubin are products from the same PKS derived precursors and the latter are likely shunt products in the pathway of xanthone biosynthesis. It is proposed that atrochrysone carboxylic acid released from the PKS CPUR_05437 can also be converted to endocrocin anthrone which is further oxidized into endocrocin by CPUR_05435. Endocrocin could be then modified to clavorubin, possibly by CPUR_05423 and CPUR_05431. Clavorubin is the principal anthraquinone metabolite produced by the cluster with a much higher yield compared to endocrocin. The polypeptide is Scytalone dehydratase-like protein CPUR_05428 (Claviceps purpurea (strain 20.1) (Ergot fungus)).